The primary structure comprises 1409 residues: Copia protein (1409 aa).

The CCHC-type zinc finger occupies 230–247; that stretch reads VKCHHCGREGHIKKDCFH. Aspartate 292 (for protease activity) is an active-site residue. In terms of domain architecture, Integrase catalytic spans 476–644; the sequence is HIKRPLFVVH…TPYEMWHNKK (169 aa). Disordered regions lie at residues 760 to 780 and 805 to 851; these read SKES…QTEF and NESK…NDGI. Basic and acidic residues predominate over residues 827–841; it reads ESRESETAEHLKEIG.

The polypeptide is Copia protein (GIP) (Drosophila melanogaster (Fruit fly)).